The primary structure comprises 528 residues: MKPNLKQWKQLMLFGIFAWGLLFLVIFIYFTDSNSAEPVPSSFSYIETKRLLPLQGKQRVIMGAIHDPSFSEAIDGNEVLLNEDLLDTFKSETGSIKKWTDLEDAFRSEDEFFPSQIGRKSKSAFYQVNDDYLFAAGQPMSHNSFQEIAKFISADEDNPKESILQNNWSRQRRMRRRSTKHRRSQMLDESDDWDGLYSTMSKSFLYKLWKGDVSSKMLNPRLQKAMKDYLSTNKHGVRFKGKRNSKLTGDQLFCELKERVDVKTIDGKEAPFSTLGWEKHVPQIPLGKLYTHGFGSCAVVMSAGAILNSSLGDEIDSHDAVLRFNSAPTRGYEKDVGNKTTMRIINSQILTNPNHHFVDSSLYKDVILVAWDPAPYSANLNWYKKPDYNLFTPYVQHRKKNPNQPFYILHPKFIWQLWDIIQENTKEKIQPNPPSSGFIGILIMMSMCNEVHVYEYIPSVRQTDLCHYHELYYDAACTLGAYHPLLYEKLLVQRMNKGLQDDLYRKGKVILPGFKSVKCPERNNFPPL.

Residues 1-10 (MKPNLKQWKQ) are Cytoplasmic-facing. Residues 11-31 (LMLFGIFAWGLLFLVIFIYFT) traverse the membrane as a helical; Signal-anchor for type II membrane protein segment. At 32–528 (DSNSAEPVPS…CPERNNFPPL (497 aa)) the chain is on the lumenal side. Residues N167, N308, and N338 are each glycosylated (N-linked (GlcNAc...) asparagine). 3 disulfide bridges follow: C254–C519, C297–C448, and C466–C477.

It belongs to the glycosyltransferase 29 family.

It is found in the golgi apparatus. Its subcellular location is the golgi stack membrane. The catalysed reaction is a beta-D-galactoside + CMP-N-acetyl-beta-neuraminate = an N-acetyl-alpha-neuraminyl-(2-&gt;6)-beta-D-galactosyl derivative + CMP + H(+). Transfers sialic acid from the donor of substrate CMP-sialic acid to galactose containing acceptor substrates. The sequence is that of Beta-galactoside alpha-2,6-sialyltransferase 2 (ST6GAL2) from Gallus gallus (Chicken).